The primary structure comprises 948 residues: Protein translocase subunit SecA (948 aa).

ATP is bound by residues glutamine 90, 108–112, and aspartate 509; that span reads GEGKT.

This sequence belongs to the SecA family. As to quaternary structure, monomer and homodimer. Part of the essential Sec protein translocation apparatus which comprises SecA, SecYEG and auxiliary proteins SecDF. Other proteins may also be involved.

It localises to the cell inner membrane. It is found in the cellular thylakoid membrane. The protein resides in the cytoplasm. The catalysed reaction is ATP + H2O + cellular proteinSide 1 = ADP + phosphate + cellular proteinSide 2.. Functionally, part of the Sec protein translocase complex. Interacts with the SecYEG preprotein conducting channel. Has a central role in coupling the hydrolysis of ATP to the transfer of proteins into and across the cell membrane, serving as an ATP-driven molecular motor driving the stepwise translocation of polypeptide chains across the membrane. In terms of biological role, probably participates in protein translocation into and across both the cytoplasmic and thylakoid membranes in cyanobacterial cells. The chain is Protein translocase subunit SecA from Prochlorococcus marinus (strain MIT 9313).